The chain runs to 172 residues: RNA pyrophosphohydrolase (172 aa).

Residues 6-149 (GFRANVGIII…KRDVYRKVMK (144 aa)) enclose the Nudix hydrolase domain. A Nudix box motif is present at residues 38–59 (GGLDDGESAEEAMYRELYEEVG).

Belongs to the Nudix hydrolase family. RppH subfamily. The cofactor is a divalent metal cation.

Accelerates the degradation of transcripts by removing pyrophosphate from the 5'-end of triphosphorylated RNA, leading to a more labile monophosphorylated state that can stimulate subsequent ribonuclease cleavage. This chain is RNA pyrophosphohydrolase, found in Shewanella denitrificans (strain OS217 / ATCC BAA-1090 / DSM 15013).